A 611-amino-acid polypeptide reads, in one-letter code: Probable methyltransferase PMT1 (611 aa).

Over 1-11 (MRGRSEGGKKK) the chain is Cytoplasmic. A helical; Signal-anchor for type II membrane protein transmembrane segment spans residues 12 to 32 (PVIVLLCVASVVLVFVYLFFG). The Lumenal segment spans residues 33–611 (SSNHKAIEYG…LTSESLRDLE (579 aa)). A glycan (N-linked (GlcNAc...) asparagine) is linked at Asn345.

It belongs to the methyltransferase superfamily.

It is found in the golgi apparatus membrane. The protein is Probable methyltransferase PMT1 of Arabidopsis thaliana (Mouse-ear cress).